The primary structure comprises 117 residues: Non-specific lipid-transfer protein Lac s 1 (117 aa).

An N-terminal signal peptide occupies residues 1-25; sequence MARMAMMILCVVLTCMVVATPYTEA. 4 disulfides stabilise this stretch: C29–C76, C39–C53, C54–C99, and C74–C113.

The protein belongs to the plant LTP family.

In terms of biological role, plant non-specific lipid-transfer proteins transfer phospholipids as well as galactolipids across membranes. May play a role in wax or cutin deposition in the cell walls of expanding epidermal cells and certain secretory tissues. The sequence is that of Non-specific lipid-transfer protein Lac s 1 from Lactuca sativa (Garden lettuce).